The chain runs to 692 residues: Glycine--tRNA ligase beta subunit (692 aa).

The protein belongs to the class-II aminoacyl-tRNA synthetase family. As to quaternary structure, tetramer of two alpha and two beta subunits.

It localises to the cytoplasm. The enzyme catalyses tRNA(Gly) + glycine + ATP = glycyl-tRNA(Gly) + AMP + diphosphate. In Limosilactobacillus fermentum (strain NBRC 3956 / LMG 18251) (Lactobacillus fermentum), this protein is Glycine--tRNA ligase beta subunit.